Here is a 557-residue protein sequence, read N- to C-terminus: TWiK family of potassium channels protein 7 (557 aa).

Disordered regions lie at residues 1–34 and 128–151; these read MTSS…EALL and DKSG…EEEE. Over 1–165 the chain is Cytoplasmic; sequence MTSSSRGYQR…RKFAKLVLPH (165 aa). Positions 134-151 are enriched in acidic residues; sequence DIDDESDDESKDEDEEEE. The helical transmembrane segment at 166–186 threads the bilayer; the sequence is VALVLLTCTYTVIGALIFYSV. N-linked (GlcNAc...) asparagine glycosylation is found at Asn220 and Asn237. Positions 270–290 form an intramembrane region, pore-forming; it reads SIFFAVTVVTTIGYGNPVPVT. The helical transmembrane segment at 295-315 threads the bilayer; that stretch reads IWCILFSLLGIPLTLVTIADL. Residues 316-368 lie on the Cytoplasmic side of the membrane; the sequence is GKFLSEHLVWLYGNYLKLKYLILSRHRKERREHVCEHCHSHGMGHDMNIEEKR. A helical membrane pass occupies residues 369 to 389; sequence IPAFLVLAILIVYTAFGGVLM. Positions 397–417 form an intramembrane region, pore-forming; it reads FFTSFYWSFITMTTVGFGDLM. The helical transmembrane segment at 426–446 threads the bilayer; it reads IILLYIILGLAITTMCIDLVG. Over 447–557 the chain is Cytoplasmic; sequence VQYIRKIHYF…SRYSLNRAFK (111 aa).

The protein belongs to the two pore domain potassium channel (TC 1.A.1.8) family.

It is found in the membrane. This chain is TWiK family of potassium channels protein 7 (twk-7), found in Caenorhabditis elegans.